Consider the following 375-residue polypeptide: Aminomethyltransferase (375 aa).

Belongs to the GcvT family. The glycine cleavage system is composed of four proteins: P, T, L and H.

It catalyses the reaction N(6)-[(R)-S(8)-aminomethyldihydrolipoyl]-L-lysyl-[protein] + (6S)-5,6,7,8-tetrahydrofolate = N(6)-[(R)-dihydrolipoyl]-L-lysyl-[protein] + (6R)-5,10-methylene-5,6,7,8-tetrahydrofolate + NH4(+). The glycine cleavage system catalyzes the degradation of glycine. In Cupriavidus pinatubonensis (strain JMP 134 / LMG 1197) (Cupriavidus necator (strain JMP 134)), this protein is Aminomethyltransferase.